A 216-amino-acid polypeptide reads, in one-letter code: Pyridoxine/pyridoxamine 5'-phosphate oxidase (216 aa).

FMN-binding positions include 63 to 68 (RMVLMK), 78 to 79 (YS), K85, and Q107. K68 is a substrate binding site. Y125 and R129 together coordinate substrate. FMN is bound by residues 142–143 (QS) and W187. 193-195 (RLH) is a binding site for substrate. R197 is an FMN binding site.

This sequence belongs to the pyridoxamine 5'-phosphate oxidase family. In terms of assembly, homodimer. Requires FMN as cofactor.

It catalyses the reaction pyridoxamine 5'-phosphate + O2 + H2O = pyridoxal 5'-phosphate + H2O2 + NH4(+). It carries out the reaction pyridoxine 5'-phosphate + O2 = pyridoxal 5'-phosphate + H2O2. The protein operates within cofactor metabolism; pyridoxal 5'-phosphate salvage; pyridoxal 5'-phosphate from pyridoxamine 5'-phosphate: step 1/1. Its pathway is cofactor metabolism; pyridoxal 5'-phosphate salvage; pyridoxal 5'-phosphate from pyridoxine 5'-phosphate: step 1/1. Functionally, catalyzes the oxidation of either pyridoxine 5'-phosphate (PNP) or pyridoxamine 5'-phosphate (PMP) into pyridoxal 5'-phosphate (PLP). The protein is Pyridoxine/pyridoxamine 5'-phosphate oxidase of Bradyrhizobium sp. (strain ORS 278).